Reading from the N-terminus, the 311-residue chain is Small ribosomal subunit biogenesis GTPase RsgA (311 aa).

One can recognise a CP-type G domain in the interval 88 to 246 (SKEKEQVIVA…VIDTPGIREF (159 aa)). GTP-binding positions include 137 to 140 (NKID) and 188 to 196 (GHSGVGKST). Zn(2+)-binding residues include Cys270, Cys275, His277, and Cys283.

The protein belongs to the TRAFAC class YlqF/YawG GTPase family. RsgA subfamily. In terms of assembly, monomer. Associates with 30S ribosomal subunit, binds 16S rRNA. Zn(2+) is required as a cofactor.

It is found in the cytoplasm. One of several proteins that assist in the late maturation steps of the functional core of the 30S ribosomal subunit. Helps release RbfA from mature subunits. May play a role in the assembly of ribosomal proteins into the subunit. Circularly permuted GTPase that catalyzes slow GTP hydrolysis, GTPase activity is stimulated by the 30S ribosomal subunit. This Chlorobaculum tepidum (strain ATCC 49652 / DSM 12025 / NBRC 103806 / TLS) (Chlorobium tepidum) protein is Small ribosomal subunit biogenesis GTPase RsgA.